Here is a 1241-residue protein sequence, read N- to C-terminus: ATP-dependent helicase/nuclease subunit A (1241 aa).

One can recognise a UvrD-like helicase ATP-binding domain in the interval 12–485 (SQWTDDQWKA…IDLAKNFRSR (474 aa)). Residue 33–40 (AAAGSGKT) coordinates ATP. One can recognise a UvrD-like helicase C-terminal domain in the interval 505-805 (GEIDYDADAE…RIMTIHKSKG (301 aa)).

The protein belongs to the helicase family. AddA subfamily. As to quaternary structure, heterodimer of AddA and AddB/RexB. Mg(2+) is required as a cofactor.

The catalysed reaction is Couples ATP hydrolysis with the unwinding of duplex DNA by translocating in the 3'-5' direction.. It catalyses the reaction ATP + H2O = ADP + phosphate + H(+). The heterodimer acts as both an ATP-dependent DNA helicase and an ATP-dependent, dual-direction single-stranded exonuclease. Recognizes the chi site generating a DNA molecule suitable for the initiation of homologous recombination. The AddA nuclease domain is required for chi fragment generation; this subunit has the helicase and 3' -&gt; 5' nuclease activities. The chain is ATP-dependent helicase/nuclease subunit A from Bacillus cereus (strain G9842).